Here is a 224-residue protein sequence, read N- to C-terminus: 2,5-diamino-6-ribosylamino-4(3H)-pyrimidinone 5'-phosphate reductase (224 aa).

Residues Thr-57, Asp-61, 82–85 (STAN), Val-131, and 153–156 (GASI) contribute to the NADP(+) site.

Belongs to the HTP reductase family. As to quaternary structure, homodimer.

The catalysed reaction is 2,5-diamino-6-(1-D-ribitylamino)pyrimidin-4(3H)-one 5'-phosphate + NADP(+) = 2,5-diamino-6-(1-D-ribosylamino)pyrimidin-4(3H)-one 5'-phosphate + NADPH + H(+). The enzyme catalyses 2,5-diamino-6-(1-D-ribitylamino)pyrimidin-4(3H)-one 5'-phosphate + NAD(+) = 2,5-diamino-6-(1-D-ribosylamino)pyrimidin-4(3H)-one 5'-phosphate + NADH + H(+). Its pathway is cofactor biosynthesis; riboflavin biosynthesis. In terms of biological role, catalyzes an early step in riboflavin biosynthesis, the NADPH-dependent reduction of the ribose side chain of 2,5-diamino-6-ribosylamino-4(3H)-pyrimidinone 5'-phosphate, yielding 2,5-diamino-6-ribitylamino-4(3H)-pyrimidinone 5'-phosphate. In Aquifex aeolicus (strain VF5), this protein is 2,5-diamino-6-ribosylamino-4(3H)-pyrimidinone 5'-phosphate reductase (ribD2).